Consider the following 508-residue polypeptide: Photosystem II CP47 reaction center protein (508 aa).

A run of 6 helical transmembrane segments spans residues 21–36, 101–115, 140–156, 203–218, 237–252, and 457–472; these read SVHIMHTALVSGWAGS, IVFSGLCFLAAIWHW, GIHLFLSGVACFGSGAF, IAAGILGILAGLFHLS, VLSSSIAAVFFAAFIV, and TFALLFFFGHIWHGAR.

It belongs to the PsbB/PsbC family. PsbB subfamily. PSII is composed of 1 copy each of membrane proteins PsbA, PsbB, PsbC, PsbD, PsbE, PsbF, PsbH, PsbI, PsbJ, PsbK, PsbL, PsbM, PsbT, PsbX, PsbY, PsbZ, Psb30/Ycf12, at least 3 peripheral proteins of the oxygen-evolving complex and a large number of cofactors. It forms dimeric complexes. The cofactor is Binds multiple chlorophylls. PSII binds additional chlorophylls, carotenoids and specific lipids..

The protein localises to the plastid. It is found in the chloroplast thylakoid membrane. In terms of biological role, one of the components of the core complex of photosystem II (PSII). It binds chlorophyll and helps catalyze the primary light-induced photochemical processes of PSII. PSII is a light-driven water:plastoquinone oxidoreductase, using light energy to abstract electrons from H(2)O, generating O(2) and a proton gradient subsequently used for ATP formation. The sequence is that of Photosystem II CP47 reaction center protein from Cycas taitungensis (Prince sago).